Reading from the N-terminus, the 669-residue chain is Protein ENTREP3 (669 aa).

3 helical membrane-spanning segments follow: residues 34-54, 67-87, and 91-111; these read LLTLGLAQVLLGILVITFSMV, SCPSWAGFSLAFSGLVGIVSW, and FTLVISFFSLLSVLCVMLSMA. The N-linked (GlcNAc...) asparagine glycan is linked to N160. The helical transmembrane segment at 174–194 threads the bilayer; it reads LFSVCGLTICAAIICTLSAIV. 2 positions are modified to phosphoserine: S359 and S390. Disordered stretches follow at residues 387–420, 445–502, and 550–571; these read FEDSPLPRRPPRAARSYSCSAPEAPPPLGAPTAA, PRGG…TTSS, and RSAEKRRPVPTFQKVPLPSGPT. Over residues 399–408 the composition is skewed to low complexity; the sequence is AARSYSCSAP. A Phosphoserine modification is found at S494. A Phosphoserine modification is found at S575. A disordered region spans residues 597–624; the sequence is RRSPDPTGTGAHGYKQVRRSPWGRPGRE.

This sequence belongs to the ENTREP family. May interact with WWOX.

Its subcellular location is the membrane. In Mus musculus (Mouse), this protein is Protein ENTREP3.